Consider the following 396-residue polypeptide: Elongation factor Tu (396 aa).

The tr-type G domain maps to 10–206 (KPHVNIGTIG…AVDESVPDPV (197 aa)). The G1 stretch occupies residues 19-26 (GHVDHGKT). 19 to 26 (GHVDHGKT) is a GTP binding site. Position 26 (threonine 26) interacts with Mg(2+). A G2 region spans residues 62–66 (GITIN). The segment at 83–86 (DAPG) is G3. GTP-binding positions include 83–87 (DAPGH) and 138–141 (NKAD). The interval 138–141 (NKAD) is G4. A G5 region spans residues 176–178 (SGL).

Belongs to the TRAFAC class translation factor GTPase superfamily. Classic translation factor GTPase family. EF-Tu/EF-1A subfamily. As to quaternary structure, monomer.

The protein resides in the cytoplasm. It carries out the reaction GTP + H2O = GDP + phosphate + H(+). Its function is as follows. GTP hydrolase that promotes the GTP-dependent binding of aminoacyl-tRNA to the A-site of ribosomes during protein biosynthesis. This is Elongation factor Tu from Arthrobacter sp. (strain FB24).